The sequence spans 310 residues: Malate dehydrogenase (310 aa).

NAD(+) contacts are provided by residues 7–12 and D32; that span reads GAGNVG. Substrate is bound by residues R81 and R87. NAD(+)-binding positions include N94 and 117–119; that span reads VSN. N119 and R150 together coordinate substrate. Catalysis depends on H174, which acts as the Proton acceptor.

The protein belongs to the LDH/MDH superfamily. MDH type 3 family.

It catalyses the reaction (S)-malate + NAD(+) = oxaloacetate + NADH + H(+). In terms of biological role, catalyzes the reversible oxidation of malate to oxaloacetate. This Chlorobium chlorochromatii (strain CaD3) protein is Malate dehydrogenase.